A 175-amino-acid chain; its full sequence is Nucleoside-triphosphatase THEP1 (175 aa).

Residues 15 to 22 (GNPGVGKT) and 106 to 113 (VLAIDEIG) each bind ATP.

It belongs to the THEP1 NTPase family.

The catalysed reaction is a ribonucleoside 5'-triphosphate + H2O = a ribonucleoside 5'-diphosphate + phosphate + H(+). Functionally, has nucleotide phosphatase activity towards ATP, GTP, CTP, TTP and UTP. May hydrolyze nucleoside diphosphates with lower efficiency. The polypeptide is Nucleoside-triphosphatase THEP1 (Saccharolobus solfataricus (strain ATCC 35092 / DSM 1617 / JCM 11322 / P2) (Sulfolobus solfataricus)).